We begin with the raw amino-acid sequence, 478 residues long: Sugar transporter ERD6-like 18 (478 aa).

12 consecutive transmembrane segments (helical) span residues 31 to 51 (ITAC…SFGV), 71 to 91 (IAQF…GALF), 110 to 130 (LLCI…WLNF), 133 to 153 (ISSG…IAEI), 162 to 180 (FTFT…VYFS), 188 to 208 (ILAL…FFVP), 270 to 290 (TLVV…SAVL), 306 to 326 (IGST…VILV), 333 to 353 (PLLL…GVAF), 367 to 387 (VFTF…LGGL), 407 to 427 (IVTL…NFLL), and 433 to 453 (GTFY…WLLV).

It belongs to the major facilitator superfamily. Sugar transporter (TC 2.A.1.1) family. In terms of tissue distribution, expressed in leaf vasculature, stem and flowers.

The protein localises to the membrane. Functionally, sugar transporter. This chain is Sugar transporter ERD6-like 18 (SFP2), found in Arabidopsis thaliana (Mouse-ear cress).